Here is a 101-residue protein sequence, read N- to C-terminus: NAD(P)H-quinone oxidoreductase subunit 4L, chloroplastic (101 aa).

3 helical membrane-spanning segments follow: residues 2 to 22 (MLEHVLVLSAYLFSIGIYGLI), 32 to 52 (MCLELILNAVNINFVTFSDFF), and 61 to 81 (IFSIFVIAIAAAEAAIGPAIV).

Belongs to the complex I subunit 4L family. NDH is composed of at least 16 different subunits, 5 of which are encoded in the nucleus.

It is found in the plastid. The protein resides in the chloroplast thylakoid membrane. It catalyses the reaction a plastoquinone + NADH + (n+1) H(+)(in) = a plastoquinol + NAD(+) + n H(+)(out). It carries out the reaction a plastoquinone + NADPH + (n+1) H(+)(in) = a plastoquinol + NADP(+) + n H(+)(out). Functionally, NDH shuttles electrons from NAD(P)H:plastoquinone, via FMN and iron-sulfur (Fe-S) centers, to quinones in the photosynthetic chain and possibly in a chloroplast respiratory chain. The immediate electron acceptor for the enzyme in this species is believed to be plastoquinone. Couples the redox reaction to proton translocation, and thus conserves the redox energy in a proton gradient. This is NAD(P)H-quinone oxidoreductase subunit 4L, chloroplastic from Vitis vinifera (Grape).